Reading from the N-terminus, the 562-residue chain is NAD-dependent malic enzyme (562 aa).

Tyr101 functions as the Proton donor in the catalytic mechanism. Arg154 is a binding site for NAD(+). Lys172 acts as the Proton acceptor in catalysis. The a divalent metal cation site is built by Glu243, Asp244, and Asp267. The NAD(+) site is built by Asp267 and Asn415.

The protein belongs to the malic enzymes family. In terms of assembly, homotetramer. Mg(2+) is required as a cofactor. Mn(2+) serves as cofactor.

It catalyses the reaction (S)-malate + NAD(+) = pyruvate + CO2 + NADH. The enzyme catalyses oxaloacetate + H(+) = pyruvate + CO2. This chain is NAD-dependent malic enzyme, found in Shewanella pealeana (strain ATCC 700345 / ANG-SQ1).